A 552-amino-acid polypeptide reads, in one-letter code: Urocanate hydratase (552 aa).

Residues 49 to 50 (GG), Gln-127, 173 to 175 (GMG), Asp-193, 239 to 240 (NA), 260 to 264 (QTSAH), 270 to 271 (YI), and Tyr-319 each bind NAD(+). Cys-407 is a catalytic residue. Gly-489 is a binding site for NAD(+).

This sequence belongs to the urocanase family. NAD(+) serves as cofactor.

The protein localises to the cytoplasm. The catalysed reaction is 4-imidazolone-5-propanoate = trans-urocanate + H2O. The protein operates within amino-acid degradation; L-histidine degradation into L-glutamate; N-formimidoyl-L-glutamate from L-histidine: step 2/3. Its function is as follows. Catalyzes the conversion of urocanate to 4-imidazolone-5-propionate. This Bacillus cereus (strain ATCC 10987 / NRS 248) protein is Urocanate hydratase.